Reading from the N-terminus, the 439-residue chain is Glucan 1,3-beta-glucosidase (439 aa).

A signal peptide spans 1–18 (MLLSLLFLLSTFAFGALT). The Proton donor role is filled by E227. 2 disulfides stabilise this stretch: C311/C437 and C336/C366. Catalysis depends on E328, which acts as the Nucleophile.

It belongs to the glycosyl hydrolase 5 (cellulase A) family.

The protein resides in the secreted. The enzyme catalyses Successive hydrolysis of beta-D-glucose units from the non-reducing ends of (1-&gt;3)-beta-D-glucans, releasing alpha-glucose.. Functionally, beta-glucanases participate in the metabolism of beta-glucan, the main structural component of the cell wall. It could also function biosynthetically as a transglycosylase. The polypeptide is Glucan 1,3-beta-glucosidase (EXG1) (Lachancea kluyveri (strain ATCC 58438 / CBS 3082 / BCRC 21498 / NBRC 1685 / JCM 7257 / NCYC 543 / NRRL Y-12651) (Yeast)).